The chain runs to 344 residues: Protein-glutamate methylesterase/protein-glutamine glutaminase 1 (344 aa).

The Response regulatory domain maps to Arg5–Val122. A 4-aspartylphosphate modification is found at Asp56. Residues Phe151 to Arg343 enclose the CheB-type methylesterase domain. Residues Ser163, His189, and Asp285 contribute to the active site.

It belongs to the CheB family. Phosphorylated by CheA. Phosphorylation of the N-terminal regulatory domain activates the methylesterase activity.

Its subcellular location is the cytoplasm. It carries out the reaction [protein]-L-glutamate 5-O-methyl ester + H2O = L-glutamyl-[protein] + methanol + H(+). The catalysed reaction is L-glutaminyl-[protein] + H2O = L-glutamyl-[protein] + NH4(+). Involved in chemotaxis. Part of a chemotaxis signal transduction system that modulates chemotaxis in response to various stimuli. Catalyzes the demethylation of specific methylglutamate residues introduced into the chemoreceptors (methyl-accepting chemotaxis proteins or MCP) by CheR. Also mediates the irreversible deamidation of specific glutamine residues to glutamic acid. The polypeptide is Protein-glutamate methylesterase/protein-glutamine glutaminase 1 (Caulobacter vibrioides (strain ATCC 19089 / CIP 103742 / CB 15) (Caulobacter crescentus)).